The chain runs to 520 residues: Beta-glucosidase 45 (520 aa).

The signal sequence occupies residues 1–22; sequence MKNLTSFVIVILLQSLLFHVYG. Asparagine 3 carries N-linked (GlcNAc...) asparagine glycosylation. Residues glutamine 52, histidine 155, and 200–201 each bind a beta-D-glucoside; that span reads NE. Catalysis depends on glutamate 201, which acts as the Proton donor. Cysteine 220 and cysteine 227 are oxidised to a cystine. Asparagine 226 carries N-linked (GlcNAc...) asparagine glycosylation. Tyrosine 344 is a binding site for a beta-D-glucoside. A disulfide bridge links cysteine 352 with cysteine 357. Asparagine 378 is a glycosylation site (N-linked (GlcNAc...) asparagine). Glutamate 417 provides a ligand contact to a beta-D-glucoside. Glutamate 417 (nucleophile) is an active-site residue. Asparagine 435 carries N-linked (GlcNAc...) asparagine glycosylation. A beta-D-glucoside contacts are provided by residues tryptophan 466, 473 to 474, and phenylalanine 482; that span reads EW.

Belongs to the glycosyl hydrolase 1 family. As to expression, expressed in stems and siliques.

It catalyses the reaction Hydrolysis of terminal, non-reducing beta-D-glucosyl residues with release of beta-D-glucose.. Hydrolyzes p-nitrophenyl beta-D-glucoside and natural glucosides such as syringin, coniferin and p-coumaryl alcohol glucoside. May be involved in lignification by hydrolyzing monolignol glucosides. This is Beta-glucosidase 45 from Arabidopsis thaliana (Mouse-ear cress).